Reading from the N-terminus, the 327-residue chain is Zinc transport protein ZntB (327 aa).

Residues 1-273 (MEAIKGSDVN…ARRTYTMSLM (273 aa)) are Cytoplasmic-facing. A helical transmembrane segment spans residues 274 to 294 (AMVFLPSTFLTGLFGVNLGGI). Residues 295 to 300 (PGGGWR) lie on the Periplasmic side of the membrane. Residues 301–321 (FGFSLFCILLVVLIGGVTLWL) traverse the membrane as a helical segment. Residues 322–327 (HRSKWL) are Cytoplasmic-facing.

Belongs to the CorA metal ion transporter (MIT) (TC 1.A.35) family.

Its subcellular location is the cell inner membrane. The catalysed reaction is Zn(2+)(out) + H(+)(out) = Zn(2+)(in) + H(+)(in). Its function is as follows. Zinc transporter. Acts as a Zn(2+):proton symporter, which likely mediates zinc ion uptake. The chain is Zinc transport protein ZntB from Salmonella enteritidis PT4 (strain P125109).